Reading from the N-terminus, the 152-residue chain is MALNQLSLSLQFARDAEATAHRATLPRHAVARWIRHALAVDAEITVRIVGAEEGQRLNREFRHKDYATNVLTFDYQQEPVAVADLVLCAPVVEREAREQNKTLEEHYAHLLVHGTLHAQGWDHETSEQDAQEMEVYETAILQELGFADPYAA.

His-113, His-117, and His-123 together coordinate Zn(2+).

The protein belongs to the endoribonuclease YbeY family. Zn(2+) is required as a cofactor.

It localises to the cytoplasm. Single strand-specific metallo-endoribonuclease involved in late-stage 70S ribosome quality control and in maturation of the 3' terminus of the 16S rRNA. This chain is Endoribonuclease YbeY, found in Acidovorax ebreus (strain TPSY) (Diaphorobacter sp. (strain TPSY)).